Here is a 507-residue protein sequence, read N- to C-terminus: Cytochrome P450 monooxygenase helB3 (507 aa).

Positions 1–25 (MAVATLISILFAVLALRLCYLLIHA) are cleaved as a signal peptide. 3 N-linked (GlcNAc...) asparagine glycosylation sites follow: Asn111, Asn206, and Asn339. Cys435 is a heme binding site.

Belongs to the cytochrome P450 family. Heme serves as cofactor.

It functions in the pathway mycotoxin biosynthesis. In terms of biological role, cytochrome P450 monooxygenase; part of the gene cluster that mediates the biosynthesis of helvolic acid, an antibacterial nortriterpenoid. Protostadienol synthase helA cyclizes (3S)-oxidosqualene to (17Z)-protosta-17(20),24-dien-3-beta-ol (protostadienol). The synthesis of protostadienol is followed by several steps of monooxygenation, dehydrogenation, and acyl transfer to yield the final helvolic acid. Following the cyclization to the tetracyclic protostadienol by helA, cytochrome P450 monooxygenases helB1-mediated and helB2-mediated oxidation at C-4 and C-16, acyltransferase helD2-dependent acetylation of 16-OH, oxidation of C-21 by cytochrome P450 monooxygenase helB4, and short chain dehydrogenase helC-dependent oxidative decarboxylation yield the fusidane skeleton. This intermediate is further modified in three additional steps mediated by the cytochrome P450 monooxygenase helB3, the acyltransferase helD1, and the 3-ketosteroid 1-dehydrogenase helE to give helvolic acid. Compared with the late stages in the biosynthesis of helvolic acid, enzymes involved in the early stage modifications act in a relatively strict order. The hydroxylation of C-16 by helB1 and subsequent acetylation by helD2 should occur before the helB3-mediated oxidation of C-21. C-4 demethylation in fusidane-type antibiotics proceeds in an unusual manner though it is also achieved by oxidative decarboxylation. The methyl group at C-4 beta position is oxidized by helB1 and subsequently removed by the short chain dehydrogenase helC. In Aspergillus fumigatus (strain ATCC MYA-4609 / CBS 101355 / FGSC A1100 / Af293) (Neosartorya fumigata), this protein is Cytochrome P450 monooxygenase helB3.